The chain runs to 173 residues: Photosystem I assembly protein Ycf3 (173 aa).

TPR repeat units lie at residues Ala35–Pro68, Ser72–Met105, and Gly120–Asn153.

This sequence belongs to the Ycf3 family.

It is found in the cellular thylakoid membrane. Essential for the assembly of the photosystem I (PSI) complex. May act as a chaperone-like factor to guide the assembly of the PSI subunits. This Microcystis aeruginosa (strain NIES-843 / IAM M-2473) protein is Photosystem I assembly protein Ycf3.